The following is a 275-amino-acid chain: Exosome complex component Rrp42 (275 aa).

This sequence belongs to the RNase PH family. Rrp42 subfamily. As to quaternary structure, component of the archaeal exosome complex. Forms a hexameric ring-like arrangement composed of 3 Rrp41-Rrp42 heterodimers. The hexameric ring associates with a trimer of Rrp4 and/or Csl4 subunits.

It localises to the cytoplasm. Non-catalytic component of the exosome, which is a complex involved in RNA degradation. Contributes to the structuring of the Rrp41 active site. The polypeptide is Exosome complex component Rrp42 (Saccharolobus islandicus (strain L.S.2.15 / Lassen #1) (Sulfolobus islandicus)).